A 304-amino-acid polypeptide reads, in one-letter code: tRNA pseudouridine synthase B (304 aa).

Aspartate 38 functions as the Nucleophile in the catalytic mechanism.

It belongs to the pseudouridine synthase TruB family. Type 1 subfamily.

The catalysed reaction is uridine(55) in tRNA = pseudouridine(55) in tRNA. Responsible for synthesis of pseudouridine from uracil-55 in the psi GC loop of transfer RNAs. In Listeria welshimeri serovar 6b (strain ATCC 35897 / DSM 20650 / CCUG 15529 / CIP 8149 / NCTC 11857 / SLCC 5334 / V8), this protein is tRNA pseudouridine synthase B.